A 132-amino-acid chain; its full sequence is Small ribosomal subunit protein eS24 (132 aa).

A compositionally biased stretch (basic and acidic residues) spans 90–100 (RLAKHGLYEKK). Residues 90–132 (RLAKHGLYEKKKTSRKQRKERKNRMKKVRGTAKANVGAGKKKD) form a disordered region. Residues 101 to 119 (KTSRKQRKERKNRMKKVRG) are compositionally biased toward basic residues.

Belongs to the eukaryotic ribosomal protein eS24 family. Component of the small ribosomal subunit. Part of the small subunit (SSU) processome, composed of more than 70 proteins and the RNA chaperone small nucleolar RNA (snoRNA) U3.

It is found in the cytoplasm. The protein resides in the nucleus. Its subcellular location is the nucleolus. Its function is as follows. Component of the small ribosomal subunit. The ribosome is a large ribonucleoprotein complex responsible for the synthesis of proteins in the cell. Required for processing of pre-rRNA and maturation of 40S ribosomal subunits. Part of the small subunit (SSU) processome, first precursor of the small eukaryotic ribosomal subunit. During the assembly of the SSU processome in the nucleolus, many ribosome biogenesis factors, an RNA chaperone and ribosomal proteins associate with the nascent pre-rRNA and work in concert to generate RNA folding, modifications, rearrangements and cleavage as well as targeted degradation of pre-ribosomal RNA by the RNA exosome. The chain is Small ribosomal subunit protein eS24 (rps24) from Xenopus laevis (African clawed frog).